The sequence spans 503 residues: ATP synthase subunit alpha (503 aa).

169–176 contributes to the ATP binding site; it reads GDRKTGKT.

It belongs to the ATPase alpha/beta chains family. F-type ATPases have 2 components, CF(1) - the catalytic core - and CF(0) - the membrane proton channel. CF(1) has five subunits: alpha(3), beta(3), gamma(1), delta(1), epsilon(1). CF(0) has three main subunits: a(1), b(2) and c(9-12). The alpha and beta chains form an alternating ring which encloses part of the gamma chain. CF(1) is attached to CF(0) by a central stalk formed by the gamma and epsilon chains, while a peripheral stalk is formed by the delta and b chains.

The protein localises to the cell membrane. The enzyme catalyses ATP + H2O + 4 H(+)(in) = ADP + phosphate + 5 H(+)(out). Produces ATP from ADP in the presence of a proton gradient across the membrane. The alpha chain is a regulatory subunit. This chain is ATP synthase subunit alpha, found in Lactobacillus johnsonii (strain CNCM I-12250 / La1 / NCC 533).